A 332-amino-acid chain; its full sequence is Mitochondrial glycine transporter (332 aa).

Solcar repeat units follow at residues 11–94 (SSSY…LRQN), 121–205 (LSNL…LKKR), and 235–319 (TSAS…LIRR). 6 helical membrane-spanning segments follow: residues 17 to 42 (FGAG…TRVQ), 69 to 95 (GTVP…RQNV), 127 to 152 (LTTG…VRYE), 180 to 203 (GFGA…EELK), 239 to 265 (INFG…KTRI), and 294 to 312 (GLGL…AWTI).

The protein belongs to the mitochondrial carrier (TC 2.A.29) family. SLC25A38 subfamily.

It is found in the mitochondrion inner membrane. The enzyme catalyses glycine(in) = glycine(out). Its function is as follows. Mitochondrial glycine transporter that imports glycine into the mitochondrial matrix. Plays an important role in providing glycine for the first enzymatic step in heme biosynthesis, the condensation of glycine with succinyl-CoA to produce 5-aminolevulinate (ALA) in the mitochondrial matrix. This chain is Mitochondrial glycine transporter, found in Botryotinia fuckeliana (strain B05.10) (Noble rot fungus).